Consider the following 318-residue polypeptide: Ribose-phosphate pyrophosphokinase (318 aa).

ATP contacts are provided by residues 43–45 (DGE) and 102–103 (RQ). Mg(2+) contacts are provided by H136 and D176. Residue K199 is part of the active site. D-ribose 5-phosphate is bound by residues R201, D225, and 229–233 (DTAGT).

It belongs to the ribose-phosphate pyrophosphokinase family. Class I subfamily. As to quaternary structure, homohexamer. The cofactor is Mg(2+).

It localises to the cytoplasm. The catalysed reaction is D-ribose 5-phosphate + ATP = 5-phospho-alpha-D-ribose 1-diphosphate + AMP + H(+). It functions in the pathway metabolic intermediate biosynthesis; 5-phospho-alpha-D-ribose 1-diphosphate biosynthesis; 5-phospho-alpha-D-ribose 1-diphosphate from D-ribose 5-phosphate (route I): step 1/1. Its function is as follows. Involved in the biosynthesis of the central metabolite phospho-alpha-D-ribosyl-1-pyrophosphate (PRPP) via the transfer of pyrophosphoryl group from ATP to 1-hydroxyl of ribose-5-phosphate (Rib-5-P). The sequence is that of Ribose-phosphate pyrophosphokinase from Listeria ivanovii.